Here is a 132-residue protein sequence, read N- to C-terminus: Small ribosomal subunit protein uS8 (132 aa).

Belongs to the universal ribosomal protein uS8 family. In terms of assembly, part of the 30S ribosomal subunit. Contacts proteins S5 and S12.

Its function is as follows. One of the primary rRNA binding proteins, it binds directly to 16S rRNA central domain where it helps coordinate assembly of the platform of the 30S subunit. The protein is Small ribosomal subunit protein uS8 of Bacillus cytotoxicus (strain DSM 22905 / CIP 110041 / 391-98 / NVH 391-98).